Here is a 46-residue protein sequence, read N- to C-terminus: Peroxidase 1 (46 aa).

It belongs to the peroxidase family. Classical plant (class III) peroxidase subfamily. The cofactor is heme b. Ca(2+) serves as cofactor.

The protein localises to the secreted. The catalysed reaction is 2 a phenolic donor + H2O2 = 2 a phenolic radical donor + 2 H2O. Functionally, removal of H(2)O(2), oxidation of toxic reductants, biosynthesis and degradation of lignin, suberization, auxin catabolism, response to environmental stresses such as wounding, pathogen attack and oxidative stress. These functions might be dependent on each isozyme/isoform in each plant tissue. In Catharanthus roseus (Madagascar periwinkle), this protein is Peroxidase 1.